The primary structure comprises 341 residues: Peptidoglycan recognition protein 3 (341 aa).

The first 17 residues, 1 to 17 (MGTLPWLLAFFILGLQA), serve as a signal peptide directing secretion. N-acetylmuramoyl-L-alanine amidase domains are found at residues 77–179 (TIGW…KVCP) and 200–325 (PAKY…ILSP). An N-linked (GlcNAc...) asparagine glycan is attached at Asn-113. Disulfide bonds link Cys-178–Cys-300, Cys-194–Cys-238, and Cys-214–Cys-220. His-231, Arg-235, and Tyr-242 together coordinate peptidoglycan. Residues 264-269 (HTYGFN) form an interaction with murein region.

Belongs to the N-acetylmuramoyl-L-alanine amidase 2 family. As to quaternary structure, monomer. Homodimer; disulfide-linked. Heterodimer with PGLYRP4; disulfide-linked. In terms of processing, N-glycosylated. As to expression, detected in skin epidermis, eccrine sweat glands and ducts, ciliary body epithelial cells of the eye, in small intestine, colon, stomach and in mature epithelial cells of the tongue (at protein level). Highly expressed in skin and esophagus, expressed also in tonsils and thymus and to a much lesser extent in the stomach, descending colon, rectum and brain.

Its subcellular location is the secreted. Functionally, pattern receptor that binds to murein peptidoglycans (PGN) of Gram-positive bacteria. Has bactericidal activity towards Gram-positive bacteria. May kill Gram-positive bacteria by interfering with peptidoglycan biosynthesis. Also binds to Gram-negative bacteria, and has bacteriostatic activity towards Gram-negative bacteria. Plays a role in innate immunity. This is Peptidoglycan recognition protein 3 (PGLYRP3) from Homo sapiens (Human).